The sequence spans 215 residues: Adenylate kinase (215 aa).

10–15 (GAGKGT) contacts ATP. The segment at 30–59 (STGDILRANVRDGTKLGKEAKGYMDKGELV) is NMP. Residues Thr-31, Arg-36, 57–59 (ELV), 85–88 (GYPR), and Gln-92 each bind AMP. Residues 126 to 162 (GRYVCTCGESYHMKFNPPKKENVCDACGADLYQRDDD) are LID. Arg-127 contributes to the ATP binding site. 2 residues coordinate Zn(2+): Cys-130 and Cys-132. 135–136 (SY) is a binding site for ATP. Zn(2+) is bound by residues Cys-149 and Cys-152. AMP contacts are provided by Arg-159 and Arg-170. Gly-198 lines the ATP pocket.

The protein belongs to the adenylate kinase family. As to quaternary structure, monomer.

The protein resides in the cytoplasm. The enzyme catalyses AMP + ATP = 2 ADP. It participates in purine metabolism; AMP biosynthesis via salvage pathway; AMP from ADP: step 1/1. In terms of biological role, catalyzes the reversible transfer of the terminal phosphate group between ATP and AMP. Plays an important role in cellular energy homeostasis and in adenine nucleotide metabolism. The chain is Adenylate kinase from Methanococcoides burtonii (strain DSM 6242 / NBRC 107633 / OCM 468 / ACE-M).